The following is a 679-amino-acid chain: Glycine--tRNA ligase beta subunit (679 aa).

Belongs to the class-II aminoacyl-tRNA synthetase family. As to quaternary structure, tetramer of two alpha and two beta subunits.

The protein localises to the cytoplasm. It carries out the reaction tRNA(Gly) + glycine + ATP = glycyl-tRNA(Gly) + AMP + diphosphate. The chain is Glycine--tRNA ligase beta subunit from Streptococcus pyogenes serotype M4 (strain MGAS10750).